Reading from the N-terminus, the 66-residue chain is Conotoxin Cl14.1a (66 aa).

Residues 1–19 (MNVTAMFIVLLLTMPLTDG) form the signal peptide. Positions 20–49 (FNIRAINGGELFGLVQRDAGNALDHGFYRR) are excised as a propeptide.

This sequence belongs to the conotoxin L superfamily. Post-translationally, contains 2 disulfide bonds. Expressed by the venom duct.

It localises to the secreted. In terms of biological role, probable neurotoxin with unknown target. Possibly targets ion channels. This peptide could be considered as an apoptosis activator in some cancers (tested on lung and breast cancer cell lines). Provokes the decrease of H1299 lung cancer cells viability after 24 hours treatment, and induces a high Bax/Bcl-2 ratio, which suggests that this peptide can activate apoptosis in H1299 cells. In addition, H1299 and H1437 lung cancer cell lines treated with this peptide have decreased cell viability, activated caspases, and reduced expression of the pro-survival protein NF-kappa-B (NFKB1), indicating activation of apoptosis. In synergy with MicroRNA-101-3p, this synthetic peptide inhibits breast cancer cells (SK-BR-3 and MCF-7) migration, invasion, and proliferation through suppressing the expression of the methyltransferase EZH2. In parallel, this synergy treatment is able to promote the apoptosis of breast cancer cells. Against microbes, this synthetic toxin (at micromolar concentrations) lowers viability and inhibits host cell invasion by the opportunistic parasite Toxoplasma gondii (tachyzoite form). In addition, it permits T.gondii intracellular replication to decrease while viability of the host cell is unaffected. The chain is Conotoxin Cl14.1a from Californiconus californicus (California cone).